A 455-amino-acid polypeptide reads, in one-letter code: Epoxide hydrolase 1 (455 aa).

Residues 1 to 21 traverse the membrane as a helical; Signal-anchor for type III membrane protein segment; it reads MWLELVLASLLGFVIYWFVSR. Residues 22–455 lie on the Cytoplasmic side of the membrane; sequence DKEETLPLGD…RKFVSLAELQ (434 aa). Aspartate 226 functions as the Nucleophile in the catalytic mechanism. Position 295 is a dimethylated arginine (arginine 295). The active-site Proton donor is the tyrosine 374. Histidine 431 serves as the catalytic Proton acceptor. An N6-acetyllysine modification is found at lysine 439.

It belongs to the peptidase S33 family.

It is found in the microsome membrane. It localises to the endoplasmic reticulum membrane. The enzyme catalyses cis-stilbene oxide + H2O = (1R,2R)-hydrobenzoin. It catalyses the reaction 1-(4-methoxyphenyl)-N-methyl-N-[(3-methyloxetan-3-yl)methyl]methanamine + H2O = 2-{[(4-methoxybenzyl)(methyl)amino]methyl}-2-methylpropane-1,3-diol. The catalysed reaction is 8,9-epoxy-(5Z,11Z,14Z)-eicosatrienoate + H2O = 8,9-dihydroxy-(5Z,11Z,14Z)-eicosatrienoate. It carries out the reaction 11,12-epoxy-(5Z,8Z,14Z)-eicosatrienoate + H2O = 11,12-dihydroxy-(5Z,8Z,14Z)-eicosatrienoate. The enzyme catalyses 2-(5Z,8Z,11Z,14Z-eicosatetraenoyl)-glycerol + H2O = glycerol + (5Z,8Z,11Z,14Z)-eicosatetraenoate + H(+). Inhibited by 10-hydroxystearamide and methoxy-arachidonyl fluorophosphate. Biotransformation enzyme that catalyzes the hydrolysis of arene and aliphatic epoxides to less reactive and more water soluble dihydrodiols by the trans addition of water. May play a role in the metabolism of endogenous lipids such as epoxide-containing fatty acids. Metabolizes the abundant endocannabinoid 2-arachidonoylglycerol (2-AG) to free arachidonic acid (AA) and glycerol. Binds 20(S)-hydroxycholesterol (20(S)-OHC). This chain is Epoxide hydrolase 1, found in Rattus norvegicus (Rat).